The primary structure comprises 392 residues: ATP-dependent RNA helicase eIF4A (392 aa).

Positions 19 to 47 (DTFDDMNLKPELLRGIYAYGFERPSAIQQ) match the Q motif motif. The 171-residue stretch at 50-220 (IMPILGERDV…TKFMRDPIRI (171 aa)) folds into the Helicase ATP-binding domain. 63-70 (AQSGTGKT) is an ATP binding site. Ser65 carries the post-translational modification Phosphoserine. Residues 168–171 (DEAD) carry the DEAD box motif. The Helicase C-terminal domain occupies 231-392 (GIKQFYVAVE…EMPMNIADLI (162 aa)).

This sequence belongs to the DEAD box helicase family. eIF4A subfamily. Component of the eIF4F complex, which composition varies with external and internal environmental conditions. It is composed of at least eIF4A, eIF4E and eIF4G.

The protein resides in the cytoplasm. The enzyme catalyses ATP + H2O = ADP + phosphate + H(+). Its function is as follows. ATP-dependent RNA helicase which is a subunit of the eIF4F complex involved in cap recognition and is required for mRNA binding to ribosome. In the current model of translation initiation, eIF4A unwinds RNA secondary structures in the 5'-UTR of mRNAs which is necessary to allow efficient binding of the small ribosomal subunit, and subsequent scanning for the initiator codon. This is ATP-dependent RNA helicase eIF4A (tif1) from Schizosaccharomyces pombe (strain 972 / ATCC 24843) (Fission yeast).